We begin with the raw amino-acid sequence, 45 residues long: MRNTPFVVKINIIFLKVVSNTAVSVFCRDRRIRFNSDWSNSYFQK.

This sequence belongs to the asfivirus C62L family.

This is an uncharacterized protein from Ornithodoros (relapsing fever ticks).